We begin with the raw amino-acid sequence, 421 residues long: UDP-N-acetylglucosamine 1-carboxyvinyltransferase (421 aa).

22–23 (KN) provides a ligand contact to phosphoenolpyruvate. Arg92 contributes to the UDP-N-acetyl-alpha-D-glucosamine binding site. Cys116 (proton donor) is an active-site residue. Cys116 carries the post-translational modification 2-(S-cysteinyl)pyruvic acid O-phosphothioketal. UDP-N-acetyl-alpha-D-glucosamine-binding positions include 121 to 125 (RPVDQ), Asp304, and Ile326.

This sequence belongs to the EPSP synthase family. MurA subfamily.

Its subcellular location is the cytoplasm. The enzyme catalyses phosphoenolpyruvate + UDP-N-acetyl-alpha-D-glucosamine = UDP-N-acetyl-3-O-(1-carboxyvinyl)-alpha-D-glucosamine + phosphate. Its pathway is cell wall biogenesis; peptidoglycan biosynthesis. Cell wall formation. Adds enolpyruvyl to UDP-N-acetylglucosamine. This Bordetella avium (strain 197N) protein is UDP-N-acetylglucosamine 1-carboxyvinyltransferase.